We begin with the raw amino-acid sequence, 122 residues long: Large ribosomal subunit protein bL12 (122 aa).

The protein belongs to the bacterial ribosomal protein bL12 family. As to quaternary structure, homodimer. Part of the ribosomal stalk of the 50S ribosomal subunit. Forms a multimeric L10(L12)X complex, where L10 forms an elongated spine to which 2 to 4 L12 dimers bind in a sequential fashion. Binds GTP-bound translation factors.

Its function is as follows. Forms part of the ribosomal stalk which helps the ribosome interact with GTP-bound translation factors. Is thus essential for accurate translation. The sequence is that of Large ribosomal subunit protein bL12 from Mycoplasma pneumoniae (strain ATCC 29342 / M129 / Subtype 1) (Mycoplasmoides pneumoniae).